We begin with the raw amino-acid sequence, 53 residues long: uncharacterized protein (53 aa).

Residues 1 to 10 show a composition bias toward polar residues; that stretch reads MHILTRSSKN. The segment at 1–25 is disordered; that stretch reads MHILTRSSKNAFPRSRSRQDIHISS.

This is an uncharacterized protein from Saccharomyces cerevisiae (strain ATCC 204508 / S288c) (Baker's yeast).